Consider the following 133-residue polypeptide: Capsid protein (133 aa).

The protein belongs to the Leviviricetes capsid protein family. In terms of assembly, homodimer. The capsid protein dimer binds to the viral RNA via an operator hairpin, but also many other RNA sequences in the viral genome.

Its subcellular location is the virion. Its function is as follows. Capsid protein self-assembles to form an icosahedral capsid with a T=3 symmetry, about 26 nm in diameter, and consisting of 89 capsid proteins dimers (178 capsid proteins). Involved in viral genome encapsidation through the interaction between a capsid protein dimer and the multiple packaging signals present in the RNA genome. Binding of the capsid proteins to the viral RNA induces a conformational change required for efficient T=3 shell formation. The capsid also contains 1 copy of the A2 maturation protein. In terms of biological role, acts as a translational repressor of viral replicase synthesis late in infection. This latter function is the result of capsid protein interaction with an RNA hairpin which contains the replicase ribosome-binding site. The polypeptide is Capsid protein (Escherichia coli).